The following is a 1182-amino-acid chain: Exocyst complex component 4 (1182 aa).

The segment covering Asn-236 to Ser-250 has biased composition (low complexity). 4 disordered regions span residues Asn-236–Pro-262, Ile-376–Ile-427, Glu-525–Thr-545, and Gln-921–Asn-968. The segment covering Gly-392 to Gly-409 has biased composition (gly residues). The segment covering Asn-410–Asn-426 has biased composition (low complexity). The segment covering Gln-921–Gln-932 has biased composition (low complexity). A compositionally biased stretch (polar residues) spans Val-933 to Asn-968.

This sequence belongs to the SEC8 family. The exocyst complex is composed of sec3/exoc1, sec5/exoc2, sec6/exoc3, sec8/exoc4, sec10/exoc5, sec15/exoc6, exo70/exoc7 and exo84/exoc8.

The protein localises to the midbody. It localises to the midbody ring. It is found in the cell projection. The protein resides in the cytoplasm. Its subcellular location is the cytoskeleton. The protein localises to the microtubule organizing center. It localises to the centrosome. Component of the exocyst complex involved in the docking of exocytic vesicles with fusion sites on the plasma membrane. In Dictyostelium discoideum (Social amoeba), this protein is Exocyst complex component 4 (exoc4).